The chain runs to 451 residues: Ubiquitin hydrolase B (451 aa).

Positions 19-450 (RGLINTSNTC…EAYLLLYQLV (432 aa)) constitute a USP domain. Over residues 83–115 (NNSNSTTTTSSSSTTATTTSTSNNNKSQTPTSP) the composition is skewed to low complexity. The tract at residues 83–154 (NNSNSTTTTS…PPINPKHFND (72 aa)) is disordered. Polar residues predominate over residues 116 to 135 (IQQHHQSQTNGLSNQPSVAT). Residue His399 is the Nucleophile of the active site. His408 functions as the Proton acceptor in the catalytic mechanism.

This sequence belongs to the peptidase C19 family. As to quaternary structure, interacts with mkkA (via F-box/WD40 domains).

The catalysed reaction is Thiol-dependent hydrolysis of ester, thioester, amide, peptide and isopeptide bonds formed by the C-terminal Gly of ubiquitin (a 76-residue protein attached to proteins as an intracellular targeting signal).. Functionally, required for proper prespore cell patterning. Plays a role in stabilizing mkkA by preventing it from being targeted for degradation. ubcB and ubpB differentially control ubiquitination/deubiquitination and degradation of mkkA in a cell-type-specific and temporally regulated manner. The chain is Ubiquitin hydrolase B (ubpB) from Dictyostelium discoideum (Social amoeba).